A 128-amino-acid polypeptide reads, in one-letter code: Small ribosomal subunit protein uS11 (128 aa).

Belongs to the universal ribosomal protein uS11 family. Part of the 30S ribosomal subunit. Interacts with proteins S7 and S18. Binds to IF-3.

In terms of biological role, located on the platform of the 30S subunit, it bridges several disparate RNA helices of the 16S rRNA. Forms part of the Shine-Dalgarno cleft in the 70S ribosome. In Vesicomyosocius okutanii subsp. Calyptogena okutanii (strain HA), this protein is Small ribosomal subunit protein uS11.